Reading from the N-terminus, the 357-residue chain is Protein RecA (357 aa).

69–76 (GPESSGKT) contributes to the ATP binding site. Residues 337-357 (SANSVAKNNEDDEDEDVEEEE) form a disordered region. Positions 346–357 (EDDEDEDVEEEE) are enriched in acidic residues.

It belongs to the RecA family.

The protein resides in the cytoplasm. Can catalyze the hydrolysis of ATP in the presence of single-stranded DNA, the ATP-dependent uptake of single-stranded DNA by duplex DNA, and the ATP-dependent hybridization of homologous single-stranded DNAs. It interacts with LexA causing its activation and leading to its autocatalytic cleavage. In Nostoc sp. (strain PCC 7120 / SAG 25.82 / UTEX 2576), this protein is Protein RecA.